The primary structure comprises 701 residues: Coiled-coil domain-containing protein 62 (701 aa).

Coiled-coil stretches lie at residues 61-197 and 241-342; these read ETST…LQAR and TCVV…QFLN. The tract at residues 624 to 652 is disordered; the sequence is KSAEREEESAALPDRRTSANEKDDFSPTS. Positions 636-648 are enriched in basic and acidic residues; the sequence is PDRRTSANEKDDF. Short sequence motifs (LXXLL motif) lie at residues 654–658 and 670–674; these read LQRLL and LSTLL.

As to quaternary structure, interacts with ESR1 and ESR2 in the presence of estradiol/E2. The interaction with ESR2 recruits CCDC62 to ER target genes, including cyclin-D1/CCND1 AP-1 promoter. Interacts with GOPC. In terms of tissue distribution, highly expressed in testis, not detected in other tissues (at protein level). Expressed at low levels in the epididymis, lung, spleen, bladder, kidney, liver, muscle.

It localises to the cytoplasm. It is found in the nucleus. The protein resides in the cytoplasmic vesicle. The protein localises to the secretory vesicle. Its subcellular location is the acrosome. Functionally, nuclear receptor coactivator that can enhance preferentially estrogen receptors ESR1 and ESR2 transactivation. Also modulates progesterone/PGR, glucocorticoid/NR3C1 and androgen/AR receptors transactivation, although at lower level; little effect on vitamin D receptor/VDR. Required for normal spermiogenesis. It probably plays a role in acrosome formation. The sequence is that of Coiled-coil domain-containing protein 62 (Ccdc62) from Mus musculus (Mouse).